A 248-amino-acid polypeptide reads, in one-letter code: 3-deoxy-manno-octulosonate cytidylyltransferase (248 aa).

It belongs to the KdsB family.

The protein localises to the cytoplasm. The catalysed reaction is 3-deoxy-alpha-D-manno-oct-2-ulosonate + CTP = CMP-3-deoxy-beta-D-manno-octulosonate + diphosphate. It functions in the pathway nucleotide-sugar biosynthesis; CMP-3-deoxy-D-manno-octulosonate biosynthesis; CMP-3-deoxy-D-manno-octulosonate from 3-deoxy-D-manno-octulosonate and CTP: step 1/1. The protein operates within bacterial outer membrane biogenesis; lipopolysaccharide biosynthesis. Activates KDO (a required 8-carbon sugar) for incorporation into bacterial lipopolysaccharide in Gram-negative bacteria. The chain is 3-deoxy-manno-octulosonate cytidylyltransferase from Christiangramia forsetii (strain DSM 17595 / CGMCC 1.15422 / KT0803) (Gramella forsetii).